Here is a 485-residue protein sequence, read N- to C-terminus: GlcNAc-binding protein A (485 aa).

Positions 1-23 are cleaved as a signal peptide; sequence MKKQPKMTAIALILSGISGLAYG. The Chitin-binding type-4 domain occupies 24 to 201; the sequence is HGYVSAVENG…SFYNVIDVKF (178 aa). A Chitin-binding type-3 domain is found at 437–478; that stretch reads AGTKVLASDGAIYQCKPWPYSGYCQQWTSNATQYQPGTGSHW.

The protein belongs to the GbpA family.

Its subcellular location is the secreted. Functionally, probably interacts with GlcNAc residues. May promote attachment to both epithelial cell surfaces and chitin. The chain is GlcNAc-binding protein A from Vibrio cholerae serotype O1 (strain M66-2).